The primary structure comprises 505 residues: Phosphoglycerate kinase, glycosomal (505 aa).

(2R)-3-phosphoglycerate contacts are provided by V29, D30, F31, N32, R45, S67, H68, G70, R71, L219, R220, H256, and R257. Residues G302 and A303 each coordinate ADP. Position 302 (G302) interacts with CDP. Positions 303 and 304 each coordinate AMP. A303 contributes to the ATP binding site. A303 is a Mg(2+) binding site. K304 contacts (2R)-3-phosphoglycerate. A CDP-binding site is contributed by D307. A Mg(2+)-binding site is contributed by D307. Positions 308 and 326 each coordinate ADP. K308 contributes to the AMP binding site. An ATP-binding site is contributed by K308. Residue G326 participates in CDP binding. Residues G327 and G399 each coordinate AMP. Residues G327 and G399 each coordinate ATP. G399 and N423 together coordinate ADP. Positions 424, 426, and 429 each coordinate CDP. 4 residues coordinate ADP: F429, E430, D462, and T463. Residue E430 participates in AMP binding. Residues E430, D462, and T463 each contribute to the ATP site. A Mg(2+)-binding site is contributed by D462.

The protein belongs to the phosphoglycerate kinase family. As to quaternary structure, monomer. Mg(2+) serves as cofactor.

Its subcellular location is the glycosome. The catalysed reaction is (2R)-3-phosphoglycerate + ATP = (2R)-3-phospho-glyceroyl phosphate + ADP. Its pathway is carbohydrate degradation; glycolysis; pyruvate from D-glyceraldehyde 3-phosphate: step 2/5. The protein is Phosphoglycerate kinase, glycosomal (PGKA) of Crithidia fasciculata.